Here is a 756-residue protein sequence, read N- to C-terminus: Disintegrin and metalloproteinase domain-containing protein 5 (756 aa).

A signal peptide spans 1 to 16; it reads MFLLLVLLTGLGGMHA. The propeptide occupies 17 to 142; sequence DLNPHKTFLQ…AVSGFIHKIY (126 aa). The Extracellular segment spans residues 17-698; sequence DLNPHKTFLQ…GRHAPFQKQR (682 aa). The 198-residue stretch at 183–380 folds into the Peptidase M12B domain; it reads RYIEMHIVVD…NGLTCLQTNP (198 aa). 4 disulfide bridges follow: cysteine 292/cysteine 375, cysteine 334/cysteine 359, cysteine 336/cysteine 341, and cysteine 449/cysteine 470. Residues 389–478 enclose the Disintegrin domain; that stretch reads RRICGNGLLE…YCLLDTYVRD (90 aa). Residue asparagine 559 is glycosylated (N-linked (GlcNAc...) asparagine). Positions 630–664 constitute an EGF-like domain; the sequence is DFETCEASIECSGHGICNNFNHCHCEKGYNPPHCK. Disulfide bonds link cysteine 634–cysteine 646, cysteine 640–cysteine 652, and cysteine 654–cysteine 663. The chain crosses the membrane as a helical span at residues 699-719; that stretch reads FQLIFYISLPVLIITTAILIK. Topologically, residues 720-756 are cytoplasmic; sequence RKKLRELCYRGETESESSVSQESSSNSKSSLSESTSL. The segment at 731 to 756 is disordered; the sequence is ETESESSVSQESSSNSKSSLSESTSL. The segment covering 735 to 756 has biased composition (low complexity); the sequence is ESSVSQESSSNSKSSLSESTSL.

Interacts with TEX101. In terms of processing, subject to proteolytic processing during epididymal transit of spermatozoa. As to expression, detected in testis (at protein level). Detected in adult and prepubertal testis. Detected at very low levels in heart, kidney, brain, muscle ovary and uterus.

It localises to the membrane. In terms of biological role, this is a non catalytic metalloprotease-like protein. May play a role in sperm-egg fusion. This Macaca fascicularis (Crab-eating macaque) protein is Disintegrin and metalloproteinase domain-containing protein 5 (ADAM5).